We begin with the raw amino-acid sequence, 273 residues long: Vitamin B12-binding protein (273 aa).

An N-terminal signal peptide occupies residues 1-18; the sequence is MMKTLSSLLLLFSVSLQA. In terms of domain architecture, Fe/B12 periplasmic-binding spans 23 to 273; it reads RVISLAPHAT…EHFASIEQKR (251 aa). C183 and C263 are oxidised to a cystine.

Belongs to the BtuF family. The complex is composed of two ATP-binding proteins (BtuD), two transmembrane proteins (BtuC) and a solute-binding protein (BtuF).

It is found in the periplasm. Functionally, part of the ABC transporter complex BtuCDF involved in vitamin B12 import. Binds vitamin B12 and delivers it to the periplasmic surface of BtuC. The polypeptide is Vitamin B12-binding protein (Vibrio vulnificus (strain CMCP6)).